A 220-amino-acid polypeptide reads, in one-letter code: Large ribosomal subunit protein uL3 (220 aa).

It belongs to the universal ribosomal protein uL3 family. As to quaternary structure, part of the 50S ribosomal subunit. Forms a cluster with proteins L14 and L19.

Functionally, one of the primary rRNA binding proteins, it binds directly near the 3'-end of the 23S rRNA, where it nucleates assembly of the 50S subunit. The polypeptide is Large ribosomal subunit protein uL3 (Staphylococcus carnosus (strain TM300)).